We begin with the raw amino-acid sequence, 434 residues long: Cytochrome P450 144 (434 aa).

Substrate-binding residues include Asp124 and His128. 4 residues coordinate heme: Arg132, Arg326, His383, and Cys385.

This sequence belongs to the cytochrome P450 family. As to quaternary structure, monomer. The cofactor is heme.

In Mycobacterium tuberculosis (strain CDC 1551 / Oshkosh), this protein is Cytochrome P450 144 (cyp144).